The chain runs to 270 residues: MSLKKSPFFELRSGSVDTLLFIVKTADLDALRAELVKRFEATPEFFADDVVAIDVRRLADHERVPLDDIRGMLNDVRMRAIGVVAQPEQHAWAASAGLPLLEARDRRAPSSKAADEAPVQQAEPAAPAAGQAALFEQAGPTLADAGAPPESPAPAVAAQSATLVVDRPLRSGQQIYAKGDLVVLGPVSYGAEVIAEGNIHIYAPLRGRALAGVHGNHDARIFCTCLEPELISIAGIYRTTENPLPADVLGKSVQIRLEQEKLMIEPLRLT.

The segment at 105 to 129 (DRRAPSSKAADEAPVQQAEPAAPAA) is disordered. Low complexity predominate over residues 116-129 (EAPVQQAEPAAPAA).

This sequence belongs to the MinC family. In terms of assembly, interacts with MinD and FtsZ.

In terms of biological role, cell division inhibitor that blocks the formation of polar Z ring septums. Rapidly oscillates between the poles of the cell to destabilize FtsZ filaments that have formed before they mature into polar Z rings. Prevents FtsZ polymerization. In Burkholderia pseudomallei (strain 1106a), this protein is Probable septum site-determining protein MinC.